Here is a 120-residue protein sequence, read N- to C-terminus: Large ribosomal subunit protein uL18 (120 aa).

The protein belongs to the universal ribosomal protein uL18 family. In terms of assembly, part of the 50S ribosomal subunit; part of the 5S rRNA/L5/L18/L25 subcomplex. Contacts the 5S and 23S rRNAs.

This is one of the proteins that bind and probably mediate the attachment of the 5S RNA into the large ribosomal subunit, where it forms part of the central protuberance. The polypeptide is Large ribosomal subunit protein uL18 (Staphylococcus carnosus (strain TM300)).